The chain runs to 395 residues: NAC domain-containing protein 7 (395 aa).

One can recognise an NAC domain in the interval V7 to K156. The DNA-binding element occupies I107–R162. 2 stretches are compositionally biased toward polar residues: residues A344–E362 and T382–K395. The interval A344–K395 is disordered.

This sequence belongs to the plant vascular related NAC-domain protein family. In terms of assembly, interacts with NAC083/VNI2. As to expression, expressed in root, shoot and hypocotyl vascular elements, columella root caps, epidermal and cortex root cells and root-hypocotyl junctions. Observed predominantly in root imature xylem vessels. Present in root developing xylems. Specifically expressed in vessels in the secondary xylem of the root-hypocotyl region, and in vessels but not in interfascicular fibers in stems.

It localises to the nucleus. Transcription activator that binds to the secondary wall NAC binding element (SNBE), 5'-(T/A)NN(C/T)(T/C/G)TNNNNNNNA(A/C)GN(A/C/T)(A/T)-3', in the promoter of target genes. Involved in xylem formation by promoting the expression of secondary wall-associated transcription factors and of genes involved in secondary wall biosynthesis and programmed cell death, genes driven by the secondary wall NAC binding element (SNBE). Triggers thickening of secondary walls. This chain is NAC domain-containing protein 7, found in Arabidopsis thaliana (Mouse-ear cress).